The following is a 269-amino-acid chain: tRNA pseudouridine synthase A (269 aa).

Catalysis depends on Asp-55, which acts as the Nucleophile. Residue Tyr-111 coordinates substrate.

Belongs to the tRNA pseudouridine synthase TruA family.

The enzyme catalyses uridine(38/39/40) in tRNA = pseudouridine(38/39/40) in tRNA. Its function is as follows. Formation of pseudouridine at positions 38, 39 and 40 in the anticodon stem and loop of transfer RNAs. This chain is tRNA pseudouridine synthase A, found in Methanosarcina acetivorans (strain ATCC 35395 / DSM 2834 / JCM 12185 / C2A).